The following is a 343-amino-acid chain: Heat-inducible transcription repressor HrcA (343 aa).

Belongs to the HrcA family.

Functionally, negative regulator of class I heat shock genes (grpE-dnaK-dnaJ and groELS operons). Prevents heat-shock induction of these operons. The protein is Heat-inducible transcription repressor HrcA of Bacillus pumilus (strain SAFR-032).